Reading from the N-terminus, the 122-residue chain is Atrial gland peptide B (122 aa).

The N-terminal stretch at 1 to 21 (MKANTMFIILCLTLSTLCVSS) is a signal peptide. Positions 22–34 (QFTSVLGKIFVTN) are excised as a propeptide. I69 is subject to Isoleucine amide. Positions 73 to 122 (AAGGMEQSEGQNPETKSHSWRERSVLTPSLLSLGESLESGISKRISINQD) are excised as a propeptide. The disordered stretch occupies residues 74 to 95 (AGGMEQSEGQNPETKSHSWRER).

It belongs to the molluscan ELH family.

The protein localises to the secreted. The atrial gland peptide A and peptide B precursors are the source of the 2 peptides that, upon release from this reproductive system gland, initiate the egg-laying process by exciting the bag cell neurons. These neurons, clustered in neural connectives near the abdominal ganglion, in turn release other peptides that act directly on the ganglion and also, via the circulating hemolymph, on many other organs to control the physiological processes of egg-laying. One of these other peptides is the egg-laying hormone. This is Atrial gland peptide B from Aplysia californica (California sea hare).